Reading from the N-terminus, the 674-residue chain is MGNGVTTLTGCCTGTLAGEISRRYDVSLVHDGLGHSFCYIRPDLPGVVLPSPESPLRSDHIQETTFRSISGASVSANPSTALSGALSSDSDCPYSSAVSASAFESSGNFASLPLQPVPRGSTWQSGPIVNESGLGSAPFERRFLSGPIESGLYSGPIESTKKTEKEKPKKIRKKPKSKKNFLTFKTLFANLISNNNKPRLKKSVIEPINGSDSSDSGRLHHEPVITSSRSNENPKSDLEEEDEKQSMNSVLDVQWAQGKAGEDRVHVVVSEDNGWVFVGIYDGFSGPDAPDYLLNNLYTAVQKELNGLLWNDEKLRSLGENGMTKTGKCSDEEDPESGKENCPVINNDDAVASGARNQAKSLKWRCEWEKKSNNKTKSDNRCDQKGSNSTTTNHKDVLKALLQALRKTEDAYLELADQMVKENPELALMGSCVLVTLMKGEDVYVMNVGDSRAVLGRKPNLATGRKRQKELERIREDSSLEDKEILMNGAMRNTLVPLQLNMEHSTRIEEEVRRIKKEHPDDDCAVENDRVKGYLKVTRAFGAGFLKQPKWNDALLEMFRIDYIGTSPYITCSPSLCHHKLTSRDKFLILSSDGLYEYFSNQEAIFEVESFISAFPEGDPAQHLIQEVLLRAANKFGMDFHELLEIPQGDRRRYHDDVSVIVISLEGRIWRSSM.

Phosphoserine is present on Ser-125. Disordered regions lie at residues 153–175 (YSGP…RKKP) and 202–247 (KSVI…KQSM). Residues 244 to 665 (KQSMNSVLDV…DDVSVIVISL (422 aa)) enclose the PPM-type phosphatase domain. The Mn(2+) site is built by Asp-282 and Gly-283. The span at 373–384 (NNKTKSDNRCDQ) shows a compositional bias: basic and acidic residues. Residues 373–392 (NNKTKSDNRCDQKGSNSTTT) form a disordered region. 2 residues coordinate Mn(2+): Asp-593 and Asp-656.

Belongs to the PP2C family. The cofactor is Mg(2+). Mn(2+) serves as cofactor. As to expression, expressed at low level in seedlings, roots, leaves, stems, young inflorescences, flowers and siliques.

The protein localises to the nucleus. It carries out the reaction O-phospho-L-seryl-[protein] + H2O = L-seryl-[protein] + phosphate. The enzyme catalyses O-phospho-L-threonyl-[protein] + H2O = L-threonyl-[protein] + phosphate. This is Probable protein phosphatase 2C 66 (PLL2) from Arabidopsis thaliana (Mouse-ear cress).